Reading from the N-terminus, the 481-residue chain is Proton-coupled amino acid transporter 2 (481 aa).

Over 1 to 56 (MSVTKSAGSPQVAATVKLDLVSFPESAKKVQSQDPNPVNGSSSESSEKTKGITGFQ) the chain is Cytoplasmic. A disordered region spans residues 26–49 (SAKKVQSQDPNPVNGSSSESSEKT). The span at 29-40 (KVQSQDPNPVNG) shows a compositional bias: polar residues. The helical transmembrane segment at 57-77 (TLVHLVKGNMGTGILGLPLAV) threads the bilayer. Over 78–79 (KN) the chain is Extracellular. Residues 80-100 (AGILMGPLSLLVMGLIACHCM) form a helical membrane-spanning segment. The Cytoplasmic segment spans residues 101–146 (HILVRCAQRFCHRLNKPFMDYGDTVMHGLASSPNTWLQSHAHWGRH). Residues 147 to 167 (AVSFFLIVTQLGFCCVYIVFL) traverse the membrane as a helical segment. The Extracellular segment spans residues 168–195 (ADNLKQVVEAVNSTTISCHKNETVVLTP). A helical transmembrane segment spans residues 196–216 (TIDSRLYMLAFLPVLGLLVFI). Topologically, residues 217–220 (RNLR) are cytoplasmic. Residues 221-241 (VLTIFSLLANVSMLVSLVIIG) form a helical membrane-spanning segment. The Extracellular portion of the chain corresponds to 242–262 (QYIIQGIPDPSQLPLVASWKT). The chain crosses the membrane as a helical span at residues 263–283 (YPLFFGTAIFSFESIGVVLPL). Over 284–295 (ENKMKDARRFPT) the chain is Cytoplasmic. A helical membrane pass occupies residues 296 to 316 (ILSLGMSIITTLYIAIGALGY). Residues 317–343 (LRFGDDIKASITLNLPNCWLYQSVKLL) are Extracellular-facing. The chain crosses the membrane as a helical span at residues 344-364 (YVVGILCTHALQFYVPAEIII). At 365-377 (PLAVSQVSKRWAL) the chain is on the cytoplasmic side. Residues 378-398 (PVDLSIRLALVCVTCMLAILI) traverse the membrane as a helical segment. The Extracellular portion of the chain corresponds to 399 to 402 (PRLD). The chain crosses the membrane as a helical span at residues 403-423 (LVLSLVGSVSSSALALIIPPL). At 424–444 (LEVTTYYGEGMSPLTITKDAL) the chain is on the cytoplasmic side. Residues 445-465 (ISILGFMGFVVGTYQALDELI) traverse the membrane as a helical segment. At 466–481 (RSGNSLPLSNSTMFIQ) the chain is on the extracellular side.

The protein belongs to the amino acid/polyamine transporter 2 family. In terms of tissue distribution, expressed in lung and spleen, and to a lower extent in brain, heart, kidney and skeletal muscle.

The protein localises to the cell membrane. The protein resides in the endoplasmic reticulum membrane. Its subcellular location is the recycling endosome membrane. It carries out the reaction glycine(in) + H(+)(in) = glycine(out) + H(+)(out). The catalysed reaction is L-alanine(in) + H(+)(in) = L-alanine(out) + H(+)(out). It catalyses the reaction D-alanine(in) + H(+)(in) = D-alanine(out) + H(+)(out). The enzyme catalyses L-proline(out) + H(+)(out) = L-proline(in) + H(+)(in). It carries out the reaction D-proline(out) + H(+)(out) = D-proline(in) + H(+)(in). The catalysed reaction is 4-hydroxy-L-proline(in) + H(+)(in) = 4-hydroxy-L-proline(out) + H(+)(out). It catalyses the reaction L-serine(in) + H(+)(in) = L-serine(out) + H(+)(out). The enzyme catalyses D-serine(out) + H(+)(out) = D-serine(in) + H(+)(in). It carries out the reaction beta-alanine(in) + H(+)(in) = beta-alanine(out) + H(+)(out). The catalysed reaction is 4-aminobutanoate(in) + H(+)(in) = 4-aminobutanoate(out) + H(+)(out). It catalyses the reaction sarcosine(in) + H(+)(in) = sarcosine(out) + H(+)(out). The enzyme catalyses N,N-dimethylglycine(in) + H(+)(in) = N,N-dimethylglycine(out) + H(+)(out). Inhibited by L- and D-pipecolic acid, nipecotic acid, isonipecotic acid, L- and D-cycloserine, and L-2-azetidine-carboxylate. Its function is as follows. Electrogenic proton/amino acid symporter with a high selectivity for the small side chains amino acids glycine, alanine and proline, where both L- and D-enantiomers are transported. Extension of the backbone length, as in beta-alanine and 4-aminobutanoate or methylation of the amino group, as in sarcosine and N,N-dimethylglycine, are also tolerated but decrease transport efficiency. A free carboxyl group is preferred. The sequence is that of Proton-coupled amino acid transporter 2 from Rattus norvegicus (Rat).